We begin with the raw amino-acid sequence, 242 residues long: 1-(5-phosphoribosyl)-5-[(5-phosphoribosylamino)methylideneamino] imidazole-4-carboxamide isomerase (242 aa).

Residue Asp-8 is the Proton acceptor of the active site. The Proton donor role is filled by Asp-130.

Belongs to the HisA/HisF family.

It is found in the cytoplasm. The catalysed reaction is 1-(5-phospho-beta-D-ribosyl)-5-[(5-phospho-beta-D-ribosylamino)methylideneamino]imidazole-4-carboxamide = 5-[(5-phospho-1-deoxy-D-ribulos-1-ylimino)methylamino]-1-(5-phospho-beta-D-ribosyl)imidazole-4-carboxamide. It functions in the pathway amino-acid biosynthesis; L-histidine biosynthesis; L-histidine from 5-phospho-alpha-D-ribose 1-diphosphate: step 4/9. This Acidithiobacillus ferrooxidans (strain ATCC 53993 / BNL-5-31) (Leptospirillum ferrooxidans (ATCC 53993)) protein is 1-(5-phosphoribosyl)-5-[(5-phosphoribosylamino)methylideneamino] imidazole-4-carboxamide isomerase.